The chain runs to 207 residues: MNEMLTLVGQLRSDFGTSSARALRRQGKVPGVIYKKGITPIHVCTLEKEVAKLYRKPFFSSTVIQLQVDDQRFKVLPKAVQLHPVTEFINHIDFILVEQNGGIQKVKVPISFEGKDKSLGIKRGGYLNIVKRYVDLLCPVDKIPQCIKCDIANVPVGASIKVSRLELPEGCNLVKRTTDYVIASVIGKSSKQDKEEEGTAEDGADSK.

Belongs to the bacterial ribosomal protein bL25 family. CTC subfamily. As to quaternary structure, part of the 50S ribosomal subunit; part of the 5S rRNA/L5/L18/L25 subcomplex. Contacts the 5S rRNA. Binds to the 5S rRNA independently of L5 and L18.

This is one of the proteins that binds to the 5S RNA in the ribosome where it forms part of the central protuberance. This is Large ribosomal subunit protein bL25 from Orientia tsutsugamushi (strain Ikeda) (Rickettsia tsutsugamushi).